The sequence spans 379 residues: Dual-specificity RNA methyltransferase RlmN (379 aa).

The Proton acceptor role is filled by glutamate 95. A Radical SAM core domain is found at 101–345; it reads EETRGTLCVS…TTVRKTRGDD (245 aa). The cysteines at positions 108 and 350 are disulfide-linked. Residues cysteine 115, cysteine 119, and cysteine 122 each contribute to the [4Fe-4S] cluster site. S-adenosyl-L-methionine contacts are provided by residues 176–177, serine 208, 230–232, and asparagine 307; these read GE and SLH. Cysteine 350 acts as the S-methylcysteine intermediate in catalysis.

It belongs to the radical SAM superfamily. RlmN family. [4Fe-4S] cluster serves as cofactor.

The protein resides in the cytoplasm. It catalyses the reaction adenosine(2503) in 23S rRNA + 2 reduced [2Fe-2S]-[ferredoxin] + 2 S-adenosyl-L-methionine = 2-methyladenosine(2503) in 23S rRNA + 5'-deoxyadenosine + L-methionine + 2 oxidized [2Fe-2S]-[ferredoxin] + S-adenosyl-L-homocysteine. It carries out the reaction adenosine(37) in tRNA + 2 reduced [2Fe-2S]-[ferredoxin] + 2 S-adenosyl-L-methionine = 2-methyladenosine(37) in tRNA + 5'-deoxyadenosine + L-methionine + 2 oxidized [2Fe-2S]-[ferredoxin] + S-adenosyl-L-homocysteine. Specifically methylates position 2 of adenine 2503 in 23S rRNA and position 2 of adenine 37 in tRNAs. m2A2503 modification seems to play a crucial role in the proofreading step occurring at the peptidyl transferase center and thus would serve to optimize ribosomal fidelity. This chain is Dual-specificity RNA methyltransferase RlmN, found in Burkholderia vietnamiensis (strain G4 / LMG 22486) (Burkholderia cepacia (strain R1808)).